The following is a 172-amino-acid chain: MGDPKKPRKKWQGPSHPWRKETLLEEMQLVGEYGLRNKRELWIAKSLLREIRAKARKLLALPAEERIKLEKPLVSRLYKMGLLPSEDASLDDVLSLTVRDVLERRLQTIVYRKGLATTIRHARQLITHGHIAVNSRRVRSPGYLVSRDEENFISYYEGSPLAKMAQGGAQNV.

Positions Arg-104–Gly-168 constitute an S4 RNA-binding domain.

The protein belongs to the universal ribosomal protein uS4 family. Part of the 30S ribosomal subunit. Contacts protein S5. The interaction surface between S4 and S5 is involved in control of translational fidelity.

In terms of biological role, one of the primary rRNA binding proteins, it binds directly to 16S rRNA where it nucleates assembly of the body of the 30S subunit. Its function is as follows. With S5 and S12 plays an important role in translational accuracy. The sequence is that of Small ribosomal subunit protein uS4 from Thermofilum pendens (strain DSM 2475 / Hrk 5).